We begin with the raw amino-acid sequence, 197 residues long: MNILIIFASYLLGSLPTGFLIGKYLKNIDLRTIGSGSTGATNVLRNVGKWPALFVFIIDVGKGFIAVKIAQYYTDQELIEVIAGISAISGHIWPIWLGGKGGKAVATGLGMFLALSWKVGLASLGIFLIVLTKTKFVSLSSISAAILLPIFMFFYLGEFIHTYFFISLIVALLVIWKHRTNITRLIKGEESKINQNQ.

Transmembrane regions (helical) follow at residues 1–21 (MNIL…GFLI), 78–98 (LIEV…IWLG), 111–131 (MFLA…LIVL), 136–155 (FVSL…MFFY), and 159–176 (FIHT…LVIW).

Belongs to the PlsY family. Probably interacts with PlsX.

It is found in the cell inner membrane. The enzyme catalyses an acyl phosphate + sn-glycerol 3-phosphate = a 1-acyl-sn-glycero-3-phosphate + phosphate. It participates in lipid metabolism; phospholipid metabolism. Functionally, catalyzes the transfer of an acyl group from acyl-phosphate (acyl-PO(4)) to glycerol-3-phosphate (G3P) to form lysophosphatidic acid (LPA). This enzyme utilizes acyl-phosphate as fatty acyl donor, but not acyl-CoA or acyl-ACP. The chain is Glycerol-3-phosphate acyltransferase from Prochlorococcus marinus (strain MIT 9215).